We begin with the raw amino-acid sequence, 476 residues long: Ubiquinone biosynthesis monooxygenase COQ6, mitochondrial (476 aa).

The N-terminal 35 residues, 1-35 (MAARIGSMAGLLCVRWWSSAQLAARGGPLVASQRW), are a transit peptide targeting the mitochondrion. Residue Lys219 is modified to N6-succinyllysine.

The protein belongs to the UbiH/COQ6 family. As to quaternary structure, component of a multi-subunit COQ enzyme complex, composed of at least COQ3, COQ4, COQ5, COQ6, COQ7 and COQ9. Interacts with COQ8B and COQ7. Requires FAD as cofactor. Expressed in the kidney, in podocytes.

The protein resides in the mitochondrion inner membrane. Its subcellular location is the golgi apparatus. The protein localises to the cell projection. It catalyses the reaction 4-hydroxy-3-(all-trans-decaprenyl)benzoate + 2 reduced [2Fe-2S]-[ferredoxin] + O2 + 2 H(+) = 3,4-dihydroxy-5-(all-trans-decaprenyl)benzoate + 2 oxidized [2Fe-2S]-[ferredoxin] + H2O. The catalysed reaction is 2-methoxy-6-(all-trans-decaprenyl)phenol + 2 reduced [2Fe-2S]-[ferredoxin] + O2 + 2 H(+) = 2-methoxy-6-(all-trans-decaprenyl)benzene-1,4-diol + 2 oxidized [2Fe-2S]-[ferredoxin] + H2O. It functions in the pathway cofactor biosynthesis; ubiquinone biosynthesis. In terms of biological role, FAD-dependent monooxygenase required for two non-consecutive steps during ubiquinone biosynthesis. Required for the C5-ring hydroxylation during ubiquinone biosynthesis by catalyzing the hydroxylation of 4-hydroxy-3-(all-trans-decaprenyl)benzoic acid to 3,4-dihydroxy-5-(all-trans-decaprenyl)benzoic acid. Also acts downstream of COQ4, for the C1-hydroxylation during ubiquinone biosynthesis by catalyzing the hydroxylation of 2-methoxy-6-(all-trans-decaprenyl)phenol to 2-methoxy-6-(all-trans-decaprenyl)benzene-1,4-diol. The electrons required for the hydroxylation reaction are funneled indirectly to COQ6 from NADPH via a ferredoxin/ferredoxin reductase system composed of FDX2 and FDXR. This chain is Ubiquinone biosynthesis monooxygenase COQ6, mitochondrial, found in Mus musculus (Mouse).